Reading from the N-terminus, the 468-residue chain is ERO1-like protein alpha (468 aa).

Positions M1–G23 are cleaved as a signal peptide. 8 disulfide bridges follow: C35-C48, C37-C46, C85-C391, C94-C99, C94-C131, C99-C104, C208-C241, and C394-C397. A phosphoserine mark is found at S106 and S143. Phosphoserine; by FAM20C is present on S145. The FAD site is built by R187, T189, and W200. Residues S252 and H255 each coordinate FAD. N-linked (GlcNAc...) asparagine glycosylation occurs at N280. FAD is bound by residues R287 and R300. A glycan (N-linked (GlcNAc...) asparagine) is linked at N384.

Belongs to the EROs family. In terms of assembly, predominantly monomer. May function both as a monomer and a homodimer. Interacts with PDILT. Interacts with ERP44; the interaction results in retention of ERO1A in the endoplasmic reticulum. FAD serves as cofactor. Post-translationally, N-glycosylated. The Cys-94/Cys-99 and Cys-394/Cys-397 disulfide bonds constitute the redox-active center. The Cys-94/Cys-99 disulfide bond may accept electron from P4HB and funnel them to the active site disulfide Cys-394/Cys-397. The regulatory Cys-99/Cys-104 disulfide bond stabilizes the other regulatory bond Cys-94/Cys-131. In terms of processing, phosphorylated on Ser-145 by FAM20C in the Golgi which increases its enzymatic activity. Phosphorylation is induced by lactation. It is also induced by hypoxia and reductive stress. Widely expressed at low level. Expressed at high level in upper digestive tract. Highly expressed in esophagus. Weakly expressed in stomach and duodenum.

The protein localises to the endoplasmic reticulum membrane. The protein resides in the golgi apparatus lumen. It is found in the secreted. It localises to the cell projection. Its subcellular location is the dendrite. Enzyme activity is tightly regulated to prevent the accumulation of reactive oxygen species in the endoplasmic reticulum. Reversibly down-regulated by the formation of disulfide bonds between the active site Cys-94 and Cys-131, and between Cys-99 and Cys-104. Glutathione may be required to regulate its activity in the endoplasmic reticulum. In terms of biological role, oxidoreductase involved in disulfide bond formation in the endoplasmic reticulum. Efficiently reoxidizes P4HB/PDI, the enzyme catalyzing protein disulfide formation, in order to allow P4HB to sustain additional rounds of disulfide formation. Following P4HB reoxidation, passes its electrons to molecular oxygen via FAD, leading to the production of reactive oxygen species (ROS) in the cell. Required for the proper folding of immunoglobulins. Plays an important role in ER stress-induced, CHOP-dependent apoptosis by activating the inositol 1,4,5-trisphosphate receptor IP3R1. Involved in the release of the unfolded cholera toxin from reduced P4HB/PDI in case of infection by V.cholerae, thereby playing a role in retrotranslocation of the toxin. The sequence is that of ERO1-like protein alpha from Homo sapiens (Human).